An 81-amino-acid polypeptide reads, in one-letter code: Small ribosomal subunit protein uS17 (81 aa).

It belongs to the universal ribosomal protein uS17 family. As to quaternary structure, part of the 30S ribosomal subunit.

One of the primary rRNA binding proteins, it binds specifically to the 5'-end of 16S ribosomal RNA. This Hyphomonas neptunium (strain ATCC 15444) protein is Small ribosomal subunit protein uS17.